The primary structure comprises 291 residues: 4-hydroxy-tetrahydrodipicolinate synthase (291 aa).

Threonine 44 lines the pyruvate pocket. The Proton donor/acceptor role is filled by tyrosine 132. The active-site Schiff-base intermediate with substrate is the lysine 160. Position 202 (valine 202) interacts with pyruvate.

The protein belongs to the DapA family. Homotetramer; dimer of dimers.

The protein resides in the cytoplasm. It catalyses the reaction L-aspartate 4-semialdehyde + pyruvate = (2S,4S)-4-hydroxy-2,3,4,5-tetrahydrodipicolinate + H2O + H(+). It functions in the pathway amino-acid biosynthesis; L-lysine biosynthesis via DAP pathway; (S)-tetrahydrodipicolinate from L-aspartate: step 3/4. Functionally, catalyzes the condensation of (S)-aspartate-beta-semialdehyde [(S)-ASA] and pyruvate to 4-hydroxy-tetrahydrodipicolinate (HTPA). The protein is 4-hydroxy-tetrahydrodipicolinate synthase of Clostridium perfringens (strain ATCC 13124 / DSM 756 / JCM 1290 / NCIMB 6125 / NCTC 8237 / Type A).